The primary structure comprises 136 residues: Large ribosomal subunit protein uL16 (136 aa).

This sequence belongs to the universal ribosomal protein uL16 family. As to quaternary structure, part of the 50S ribosomal subunit.

Its function is as follows. Binds 23S rRNA and is also seen to make contacts with the A and possibly P site tRNAs. This Elusimicrobium minutum (strain Pei191) protein is Large ribosomal subunit protein uL16.